The primary structure comprises 379 residues: MSSTKLISLIVSITFFLTLQCSMAQTVVKASYWFPASEFPVTDIDSSLFTHLFCAFADLNSQTNQVTVSSANQPKFSTFTQTVQRRNPSVKTLLSIGGGIADKTAYASMASNPTSRKSFIDSSIRVARSYGFHGLDLDWEYPSSATEMTNFGTLLREWRSAVVAEASSSGKPRLLLAAAVFYSNNYYSVLYPVSAVASSLDWVNLMAYDFYGPGWSRVTGPPAALFDPSNAGPSGDAGTRSWIQAGLPAKKAVLGFPYYGYAWRLTNANSHSYYAPTTGAAISPDGSIGYGQIRKFIVDNGATTVYNSTVVGDYCYAGTNWIGYDDNQSIVTKVRYAKQRGLLGYFSWHVGADDNSGLSRAASQAWDATTATTRTIQKV.

An N-terminal signal peptide occupies residues 1–24 (MSSTKLISLIVSITFFLTLQCSMA). Positions 27–369 (VVKASYWFPA…RAASQAWDAT (343 aa)) constitute a GH18 domain. Position 99 (glycine 99) interacts with chitin. Glutamate 140 serves as the catalytic Proton donor. Tyrosine 259 serves as a coordination point for chitin. Residues asparagine 307 and asparagine 327 are each glycosylated (N-linked (GlcNAc...) asparagine). Residue tryptophan 348 coordinates chitin.

This sequence belongs to the glycosyl hydrolase 18 family. Chitinase class V subfamily.

The catalysed reaction is Random endo-hydrolysis of N-acetyl-beta-D-glucosaminide (1-&gt;4)-beta-linkages in chitin and chitodextrins.. It catalyses the reaction Hydrolysis of N,N'-diacetylchitobiose from the non-reducing end of chitin and chitodextrins.. Its pathway is glycan degradation; chitin degradation. Its function is as follows. Can hydrolyze glycol chitin and chitin oligosaccharides (e.g. N-acetylglucosamine) (GlcNAc)4, (GlcNAc)5 and (GlcNAc)6. Hydrolyzes N-acetylglucosamine oligomers producing dimers from the non-reducing end of the substrates. This chain is Class V chitinase, found in Arabidopsis thaliana (Mouse-ear cress).